A 182-amino-acid chain; its full sequence is Tropomyosin-like protein (182 aa).

A coiled-coil region spans residues 1–68; the sequence is FDRYNQILDE…ELEQRRTEQQ (68 aa). Basic and acidic residues predominate over residues 32 to 66; that stretch reads DEETKKIKQEEAEMKKKIEGEASRKKLELEQRRTE. 2 disordered regions span residues 32–81 and 140–160; these read DEET…GSTD and DQPA…DAGL. Over residues 140–153 the composition is skewed to low complexity; the sequence is DQPAQAGPEPAAPA.

Its subcellular location is the cytoplasm. The protein resides in the cytoskeleton. This is Tropomyosin-like protein from Pichia angusta (Yeast).